The sequence spans 345 residues: L-threonine 3-dehydrogenase (345 aa).

Cysteine 39 lines the Zn(2+) pocket. Residues threonine 41 and histidine 44 each act as charge relay system in the active site. Zn(2+)-binding residues include histidine 64, glutamate 65, cysteine 94, cysteine 97, cysteine 100, and cysteine 108. Residues isoleucine 176, aspartate 196, arginine 201, 263–265, and 287–288 each bind NAD(+); these read LGI and VY.

This sequence belongs to the zinc-containing alcohol dehydrogenase family. As to quaternary structure, homotetramer. The cofactor is Zn(2+).

It localises to the cytoplasm. The catalysed reaction is L-threonine + NAD(+) = (2S)-2-amino-3-oxobutanoate + NADH + H(+). It participates in amino-acid degradation; L-threonine degradation via oxydo-reductase pathway; glycine from L-threonine: step 1/2. In terms of biological role, catalyzes the NAD(+)-dependent oxidation of L-threonine to 2-amino-3-ketobutyrate. The polypeptide is L-threonine 3-dehydrogenase (Anaeromyxobacter dehalogenans (strain 2CP-1 / ATCC BAA-258)).